A 291-amino-acid chain; its full sequence is MSITIFNRDLKEIYYEKQYKNGQLKFLYNTILGRMLLKLFISTRLFSKINAIFNNNKGSIKKIEPFINEYKIDMSEYEKKEYTSFDDFFTRKILEGKRSFSKEKSHLISPADSKLMVYEIDDDLKMNIKNSIYTVGELLNDEKLSREYKNGTCLIFRLTVDDYHRYCFIDDGSLKYRKVINGRLHTVGPISSKRYKVYSENNREYSVLKTRNFGKVIQIEVGALLVGKIKNHSIKVFKKGDEKGYFCFGGSTIVLLFKEKVIKMDEDILEYSKAGIETKIKMGEKIGETND.

Catalysis depends on charge relay system; for autoendoproteolytic cleavage activity residues D112 and S251. S251 (schiff-base intermediate with substrate; via pyruvic acid; for decarboxylase activity) is an active-site residue. At S251 the chain carries Pyruvic acid (Ser); by autocatalysis.

Belongs to the phosphatidylserine decarboxylase family. PSD-B subfamily. Prokaryotic type II sub-subfamily. Heterodimer of a large membrane-associated beta subunit and a small pyruvoyl-containing alpha subunit. The cofactor is pyruvate. Post-translationally, is synthesized initially as an inactive proenzyme. Formation of the active enzyme involves a self-maturation process in which the active site pyruvoyl group is generated from an internal serine residue via an autocatalytic post-translational modification. Two non-identical subunits are generated from the proenzyme in this reaction, and the pyruvate is formed at the N-terminus of the alpha chain, which is derived from the carboxyl end of the proenzyme. The autoendoproteolytic cleavage occurs by a canonical serine protease mechanism, in which the side chain hydroxyl group of the serine supplies its oxygen atom to form the C-terminus of the beta chain, while the remainder of the serine residue undergoes an oxidative deamination to produce ammonia and the pyruvoyl prosthetic group on the alpha chain. During this reaction, the Ser that is part of the protease active site of the proenzyme becomes the pyruvoyl prosthetic group, which constitutes an essential element of the active site of the mature decarboxylase.

It is found in the cell membrane. It catalyses the reaction a 1,2-diacyl-sn-glycero-3-phospho-L-serine + H(+) = a 1,2-diacyl-sn-glycero-3-phosphoethanolamine + CO2. The protein operates within phospholipid metabolism; phosphatidylethanolamine biosynthesis; phosphatidylethanolamine from CDP-diacylglycerol: step 2/2. Functionally, catalyzes the formation of phosphatidylethanolamine (PtdEtn) from phosphatidylserine (PtdSer). The chain is Phosphatidylserine decarboxylase proenzyme 2 from Clostridium acetobutylicum (strain ATCC 824 / DSM 792 / JCM 1419 / IAM 19013 / LMG 5710 / NBRC 13948 / NRRL B-527 / VKM B-1787 / 2291 / W).